Consider the following 385-residue polypeptide: Homoserine O-succinyltransferase (385 aa).

The region spanning Asn45–Asp355 is the AB hydrolase-1 domain. Catalysis depends on Ser151, which acts as the Nucleophile. Arg221 lines the substrate pocket. Residues Asp316 and His349 contribute to the active site. Residue Asp350 participates in substrate binding.

This sequence belongs to the AB hydrolase superfamily. MetX family. In terms of assembly, homodimer.

It is found in the cytoplasm. The enzyme catalyses L-homoserine + succinyl-CoA = O-succinyl-L-homoserine + CoA. Its pathway is amino-acid biosynthesis; L-methionine biosynthesis via de novo pathway; O-succinyl-L-homoserine from L-homoserine: step 1/1. Its function is as follows. Transfers a succinyl group from succinyl-CoA to L-homoserine, forming succinyl-L-homoserine. The protein is Homoserine O-succinyltransferase of Herminiimonas arsenicoxydans.